A 595-amino-acid chain; its full sequence is Elongation factor 4 (595 aa).

Positions 2-183 (KNIRNFCIIA…AIVEQVPAPA (182 aa)) constitute a tr-type G domain. Residues 14-19 (DHGKST) and 130-133 (NKVD) contribute to the GTP site.

Belongs to the TRAFAC class translation factor GTPase superfamily. Classic translation factor GTPase family. LepA subfamily.

The protein localises to the cell inner membrane. It catalyses the reaction GTP + H2O = GDP + phosphate + H(+). In terms of biological role, required for accurate and efficient protein synthesis under certain stress conditions. May act as a fidelity factor of the translation reaction, by catalyzing a one-codon backward translocation of tRNAs on improperly translocated ribosomes. Back-translocation proceeds from a post-translocation (POST) complex to a pre-translocation (PRE) complex, thus giving elongation factor G a second chance to translocate the tRNAs correctly. Binds to ribosomes in a GTP-dependent manner. The protein is Elongation factor 4 of Porphyromonas gingivalis (strain ATCC 33277 / DSM 20709 / CIP 103683 / JCM 12257 / NCTC 11834 / 2561).